A 409-amino-acid polypeptide reads, in one-letter code: 23S rRNA (uracil(747)-C(5))-methyltransferase (409 aa).

Residues C61, C67, C70, and C137 each coordinate [4Fe-4S] cluster. Residues Q251, Y277, E298, and D339 each contribute to the S-adenosyl-L-methionine site. Catalysis depends on C365, which acts as the Nucleophile.

It belongs to the class I-like SAM-binding methyltransferase superfamily. RNA M5U methyltransferase family.

The catalysed reaction is uridine(747) in 23S rRNA + S-adenosyl-L-methionine = 5-methyluridine(747) in 23S rRNA + S-adenosyl-L-homocysteine + H(+). In terms of biological role, catalyzes the formation of 5-methyl-uridine at position equivalent to 747 (m5U747) in 23S rRNA. The protein is 23S rRNA (uracil(747)-C(5))-methyltransferase of Pyrococcus furiosus (strain ATCC 43587 / DSM 3638 / JCM 8422 / Vc1).